The chain runs to 316 residues: Epiphycan (316 aa).

An N-terminal signal peptide occupies residues 1–23 (MKTFVNIFLGFFIFESVGAVPIT). The O-linked (Xyl...) (dermatan sulfate) serine glycan is linked to S98. In terms of domain architecture, LRRNT spans 100–137 (VLVPQTQDGLPTCLLCTCLGTTVYCDDRELDAVPPLPK). Residues C112 and C124 are joined by a disulfide bond. 6 LRR repeats span residues 138–159 (NTMY…DFAN), 162–183 (NLKR…AFRR), 186–207 (QLLE…PSTL), 232–252 (ELQH…PLPE), 253–274 (SLQA…TFCK), and 284–304 (ALED…PYAY). A disulfide bridge links C273 with C306. Residue N296 is glycosylated (N-linked (GlcNAc...) asparagine).

Belongs to the small leucine-rich proteoglycan (SLRP) family. SLRP class III subfamily. The O-linked glycosaminoglycan chain(s) are dermatan sulfate. As to expression, preferentially expressed in flattened chondrocytes of developing chick limb cartilage. Also found in the cartilage peripheral zone bordering with bone marrow cavity.

Its subcellular location is the secreted. The protein localises to the extracellular space. It localises to the extracellular matrix. May have a role in bone formation and also in establishing the ordered structure of cartilage through matrix organization. The sequence is that of Epiphycan (EPYC) from Gallus gallus (Chicken).